A 601-amino-acid polypeptide reads, in one-letter code: Elongation factor 4 (601 aa).

One can recognise a tr-type G domain in the interval 7–189 (DRIRNFSIIA…ALVTRLPAPK (183 aa)). GTP contacts are provided by residues 19-24 (DHGKST) and 136-139 (NKVD).

The protein belongs to the TRAFAC class translation factor GTPase superfamily. Classic translation factor GTPase family. LepA subfamily.

Its subcellular location is the cell inner membrane. It catalyses the reaction GTP + H2O = GDP + phosphate + H(+). Required for accurate and efficient protein synthesis under certain stress conditions. May act as a fidelity factor of the translation reaction, by catalyzing a one-codon backward translocation of tRNAs on improperly translocated ribosomes. Back-translocation proceeds from a post-translocation (POST) complex to a pre-translocation (PRE) complex, thus giving elongation factor G a second chance to translocate the tRNAs correctly. Binds to ribosomes in a GTP-dependent manner. The sequence is that of Elongation factor 4 from Granulibacter bethesdensis (strain ATCC BAA-1260 / CGDNIH1).